A 781-amino-acid chain; its full sequence is Coiled-coil and C2 domain-containing protein 1-like (781 aa).

5 disordered regions span residues 32–63, 94–134, 187–296, 313–373, and 403–447; these read MGRV…NVPG, ELNG…APNS, ESEI…AKES, CSAD…TEGN, and GELP…VEGK. The segment covering 37–59 has biased composition (low complexity); the sequence is RPAAPARGAPPAARGRPAPAAPA. Residues 98 to 107 are compositionally biased toward gly residues; sequence LVGGGGGGGA. The span at 108–118 shows a compositional bias: low complexity; the sequence is APTVPTRAAPR. 2 stretches are compositionally biased toward pro residues: residues 119 to 129 and 204 to 222; these read APGPSGPPPSA and PLPP…PAPP. The segment covering 244–256 has biased composition (low complexity); that stretch reads APAPTAAAPPATK. Positions 269-280 are enriched in basic residues; that stretch reads ILHHRRDLHKQN. Basic and acidic residues predominate over residues 285 to 296; sequence IADKDKESAKES. The span at 324 to 341 shows a compositional bias: pro residues; the sequence is PPSPPPYRKPAPPQPQAP. The segment covering 363 to 373 has biased composition (basic and acidic residues); sequence KMAEKAKTEGN. One can recognise a C2 domain in the interval 605 to 741; it reads YEMRQIPSAD…EHSAEMEESL (137 aa).

This sequence belongs to the CC2D1 family.

The sequence is that of Coiled-coil and C2 domain-containing protein 1-like from Caenorhabditis elegans.